Consider the following 62-residue polypeptide: MTSTQNLKDKFEEEIRQQKEGKGKKEKVWTPHSDSSYNKQTAVKFSGVQGGPPPKKSLSQLP.

A disordered region spans residues Met1 to Pro62. The segment covering Leu7–Trp29 has biased composition (basic and acidic residues). Positions His32–Val43 are enriched in polar residues.

This is an uncharacterized protein from Dictyostelium discoideum (Social amoeba).